The following is a 37-amino-acid chain: Beta-2-microglobulin (37 aa).

One can recognise an Ig-like C1-type domain in the interval 11-37 (GKEDVLICHVSNFHPPDITITLLKNGE).

Belongs to the beta-2-microglobulin family. As to quaternary structure, heterodimer of an alpha chain and a beta chain. Beta-2-microglobulin is the beta-chain of major histocompatibility complex class I molecules.

The protein resides in the secreted. Component of the class I major histocompatibility complex (MHC). Involved in the presentation of peptide antigens to the immune system. The sequence is that of Beta-2-microglobulin (b2m) from Oreochromis niloticus (Nile tilapia).